The following is a 427-amino-acid chain: Transcobalamin-2 (427 aa).

The signal sequence occupies residues 1–18 (MELLKALLLLSGVLGALA). Cystine bridges form between cysteine 21–cysteine 268, cysteine 116–cysteine 310, and cysteine 165–cysteine 208. Cob(II)alamin-binding positions include 152–156 (TSYYQ), histidine 193, 193–197 (HLSVD), asparagine 245, serine 248, glutamine 292, and 395–397 (WQL).

This sequence belongs to the eukaryotic cobalamin transport proteins family. In terms of assembly, interacts with CD320 (via LDL-receptor class A domains).

The protein localises to the secreted. Functionally, primary vitamin B12-binding and transport protein. Delivers cobalamin to cells. This is Transcobalamin-2 (Tcn2) from Rattus norvegicus (Rat).